A 191-amino-acid chain; its full sequence is Xanthine phosphoribosyltransferase (191 aa).

Leu-20 and Asn-27 together coordinate xanthine. 128 to 132 provides a ligand contact to 5-phospho-alpha-D-ribose 1-diphosphate; that stretch reads ANGQA. Residue Lys-156 coordinates xanthine.

It belongs to the purine/pyrimidine phosphoribosyltransferase family. Xpt subfamily. Homodimer.

It localises to the cytoplasm. It carries out the reaction XMP + diphosphate = xanthine + 5-phospho-alpha-D-ribose 1-diphosphate. It participates in purine metabolism; XMP biosynthesis via salvage pathway; XMP from xanthine: step 1/1. Functionally, converts the preformed base xanthine, a product of nucleic acid breakdown, to xanthosine 5'-monophosphate (XMP), so it can be reused for RNA or DNA synthesis. The polypeptide is Xanthine phosphoribosyltransferase (Levilactobacillus brevis (strain ATCC 367 / BCRC 12310 / CIP 105137 / JCM 1170 / LMG 11437 / NCIMB 947 / NCTC 947) (Lactobacillus brevis)).